A 157-amino-acid polypeptide reads, in one-letter code: 2-C-methyl-D-erythritol 2,4-cyclodiphosphate synthase (157 aa).

A divalent metal cation contacts are provided by aspartate 8 and histidine 10. Residues 8 to 10 and 34 to 35 each bind 4-CDP-2-C-methyl-D-erythritol 2-phosphate; these read DVH and HS. Histidine 42 lines the a divalent metal cation pocket. Residues 56–58, 61–65, 100–106, 132–135, and phenylalanine 139 each bind 4-CDP-2-C-methyl-D-erythritol 2-phosphate; these read DIG, FPDTD, AQKPKMA, and TTEE.

This sequence belongs to the IspF family. In terms of assembly, homotrimer. It depends on a divalent metal cation as a cofactor.

The catalysed reaction is 4-CDP-2-C-methyl-D-erythritol 2-phosphate = 2-C-methyl-D-erythritol 2,4-cyclic diphosphate + CMP. The protein operates within isoprenoid biosynthesis; isopentenyl diphosphate biosynthesis via DXP pathway; isopentenyl diphosphate from 1-deoxy-D-xylulose 5-phosphate: step 4/6. Functionally, involved in the biosynthesis of isopentenyl diphosphate (IPP) and dimethylallyl diphosphate (DMAPP), two major building blocks of isoprenoid compounds. Catalyzes the conversion of 4-diphosphocytidyl-2-C-methyl-D-erythritol 2-phosphate (CDP-ME2P) to 2-C-methyl-D-erythritol 2,4-cyclodiphosphate (ME-CPP) with a corresponding release of cytidine 5-monophosphate (CMP). The protein is 2-C-methyl-D-erythritol 2,4-cyclodiphosphate synthase of Clostridium novyi (strain NT).